Reading from the N-terminus, the 382-residue chain is Opsin-VA (382 aa).

The Extracellular portion of the chain corresponds to 1-35 (MELFPVAVNGVSHAEDPFSGPLTFIAPWNYKVLAT). A helical transmembrane segment spans residues 36-56 (LMFVVTAASLSENFAVMLVTF). Over 57–67 (RFTQLRKPLNY) the chain is Cytoplasmic. A helical membrane pass occupies residues 68–88 (IIVNLSLADFLVSLTGGTISF). Residues 89–103 (LTNYHGYFFLGKWAC) lie on the Extracellular side of the membrane. A disulfide bond links Cys-103 and Cys-180. Residues 104–124 (VLEGFAVTYFGIVALWSLAVL) traverse the membrane as a helical segment. Residues 125-147 (AFERFFVICRPLGNIRLRGKHAA) are Cytoplasmic-facing. The chain crosses the membrane as a helical span at residues 148–168 (LGLLFVWTFSFIWTIPPVLGW). Topologically, residues 169–193 (SSYTVSKIGTTCEPNWYSGNFHDHT) are extracellular. Residues 194-214 (FIIAFFITCFILPLGVIVVCY) form a helical membrane-spanning segment. At 215–244 (CKLIKKLRKVSNTHGRLGNARKPERQVTRM) the chain is on the cytoplasmic side. The chain crosses the membrane as a helical span at residues 245–265 (VVVMIVAFMVAWTPYAAFSIV). Over 266 to 279 (VTAHPSIHLDPRLA) the chain is Extracellular. Residues 280 to 300 (AAPAFFSKTAAVYNPVIYVFM) form a helical membrane-spanning segment. The residue at position 287 (Lys-287) is an N6-(retinylidene)lysine. Over 301–382 (NKQFRKCLVQ…PIPENKVCPM (82 aa)) the chain is Cytoplasmic. Over residues 330–346 (RQGMTNESHTGEMSTIA) the composition is skewed to polar residues. The tract at residues 330–371 (RQGMTNESHTGEMSTIASRIPKDGSIPEKTQEHPGERRSLAH) is disordered. Over residues 349–368 (IPKDGSIPEKTQEHPGERRS) the composition is skewed to basic and acidic residues.

Belongs to the G-protein coupled receptor 1 family. Opsin subfamily. As to expression, expressed in a subset of retinal horizontal cells as well as in retinal ganglion cells.

The protein localises to the membrane. In Rutilus rutilus (Roach), this protein is Opsin-VA.